We begin with the raw amino-acid sequence, 433 residues long: Ornithine decarboxylase, chloroplastic (433 aa).

An N6-(pyridoxal phosphate)lysine modification is found at lysine 96. Pyridoxal 5'-phosphate-binding positions include serine 228, glycine 266, and glutamate 299–arginine 302. Tyrosine 342–aspartate 343 provides a ligand contact to substrate. Cysteine 378 (proton donor; shared with dimeric partner) is an active-site residue. Aspartate 379 contacts substrate. Tyrosine 407 contributes to the pyridoxal 5'-phosphate binding site.

It belongs to the Orn/Lys/Arg decarboxylase class-II family. In terms of assembly, homodimer. Only the dimer is catalytically active, as the active sites are constructed of residues from both monomers. The cofactor is pyridoxal 5'-phosphate.

The protein localises to the plastid. It localises to the chloroplast. It carries out the reaction L-ornithine + H(+) = putrescine + CO2. The protein operates within alkaloid biosynthesis; nicotine biosynthesis. It functions in the pathway amine and polyamine biosynthesis; putrescine biosynthesis via L-ornithine pathway; putrescine from L-ornithine: step 1/1. Functionally, involved in the biosynthesis of pyridine alkaloid natural products, leading mainly to the production of anabasine, anatabine, nicotine and nornicotine, effective deterrents against herbivores with antiparasitic and pesticide properties (neurotoxins); nornicotine serves as the precursor in the synthesis of the carcinogen compound N'-nitrosonornicotine (NNN). Catalyzes the first and rate-limiting step of polyamine biosynthesis that converts ornithine into putrescine, which is the precursor for the polyamines, spermidine and spermine. Polyamines are essential for cell proliferation and are implicated in cellular processes, ranging from DNA replication to apoptosis. This is Ornithine decarboxylase, chloroplastic from Nicotiana glauca (Glaucous tobacco).